The chain runs to 399 residues: Nuclear hormone receptor family member nhr-125 (399 aa).

Positions 10 to 80 form a DNA-binding region, nuclear receptor; it reads PFSCRICNQK…MGMDTTKFQY (71 aa). NR C4-type zinc fingers lie at residues 13-33 and 50-63; these read CRICNQKAHGNHFGVLTCRAC and CQKGGCSRNFCKRC. The region spanning 149–392 is the NR LBD domain; that stretch reads QLENLTEGFK…EKLQKSQFSI (244 aa).

It belongs to the nuclear hormone receptor family.

Its subcellular location is the nucleus. Its function is as follows. Orphan nuclear receptor. In Caenorhabditis elegans, this protein is Nuclear hormone receptor family member nhr-125 (nhr-125).